Consider the following 320-residue polypeptide: 1-aminocyclopropane-1-carboxylate oxidase 2 (320 aa).

Positions D111 to K143 form a coiled coil. The Fe2OG dioxygenase domain maps to P156–P256. 3 residues coordinate Fe cation: H180, D182, and H237. Residue R247 participates in 2-oxoglutarate binding.

The protein belongs to the iron/ascorbate-dependent oxidoreductase family. Fe(2+) is required as a cofactor. Requires Cu(2+) as cofactor. In terms of tissue distribution, expressed in vegetative tissues. Constitutively expressed in leaves and blades. In ethylene exposed etiolated seedlings, localized in cells at the outer side of the exaggerated hook in an ethylene-dependent manner and following an ethylene sensitive pattern. Also detected in the root tip when treated by ethylene.

It catalyses the reaction 1-aminocyclopropane-1-carboxylate + L-ascorbate + O2 = ethene + L-dehydroascorbate + hydrogen cyanide + CO2 + 2 H2O. It participates in alkene biosynthesis; ethylene biosynthesis via S-adenosyl-L-methionine; ethylene from S-adenosyl-L-methionine: step 2/2. In terms of biological role, enzyme involved in the ethylene biosynthesis. Required to mediate the 1-aminocyclopropane-1-carboxylic acid (ACC)-mediated reversion of the ABA-induced inhibition of seed germination via endosperm rupture. May promote stem elongation by maximizing the extensibility cells, possibly by activating ethylene biosynthesis, in response to very-long-chain fatty acids (VLCFAs C20:0 to C30:0). This chain is 1-aminocyclopropane-1-carboxylate oxidase 2 (ACO2), found in Arabidopsis thaliana (Mouse-ear cress).